Reading from the N-terminus, the 509-residue chain is Maturase K (509 aa).

This sequence belongs to the intron maturase 2 family. MatK subfamily.

Its subcellular location is the plastid. The protein resides in the chloroplast. In terms of biological role, usually encoded in the trnK tRNA gene intron. Probably assists in splicing its own and other chloroplast group II introns. This is Maturase K from Ibicella lutea (Yellow unicorn-plant).